The sequence spans 431 residues: Salivary plasminogen activator beta (431 aa).

The first 36 residues, 1-36 (MVNTMKTKLLCVLLLCGAVFSLPRQETYRQLARGSR), serve as a signal peptide directing secretion. The EGF-like domain maps to 37–75 (AYGGCSELRCFNGGTCWQAASFSDFVCQCPKGYTGKQCE). Intrachain disulfides connect Cys-41/Cys-52, Cys-46/Cys-63, Cys-65/Cys-74, Cys-82/Cys-163, Cys-103/Cys-145, Cys-134/Cys-158, Cys-168/Cys-299, Cys-211/Cys-227, Cys-219/Cys-288, Cys-313/Cys-388, Cys-345/Cys-361, and Cys-378/Cys-406. The Kringle domain occupies 82–163 (CYKDQGVTYR…ILEFCSVPVC (82 aa)). An N-linked (GlcNAc...) asparagine glycan is attached at Asn-139. Positions 180–430 (STGGLFTDIT…YLGWIRDNMR (251 aa)) constitute a Peptidase S1 domain. Active-site charge relay system residues include His-226 and Asp-275. The N-linked (GlcNAc...) asparagine glycan is linked to Asn-352. Ser-382 serves as the catalytic Charge relay system.

This sequence belongs to the peptidase S1 family. As to quaternary structure, monomer.

The protein resides in the secreted. It catalyses the reaction Specific cleavage of Arg-|-Val bond in plasminogen to form plasmin.. Probably essential to support the feeding habits of this exclusively haematophagous animal. Probable potent thrombolytic agent. The sequence is that of Salivary plasminogen activator beta from Desmodus rotundus (Vampire bat).